The sequence spans 147 residues: Hemoglobin subunit beta-Y (147 aa).

The 145-residue stretch at 3-147 folds into the Globin domain; it reads HFTAEEKAAI…VANALSLKYH (145 aa). Residues His64 and His93 each coordinate heme b.

It belongs to the globin family. In terms of assembly, heterotetramer of two alpha chains and two beta chains.

Functionally, this is a minor early embryonic beta chain. The polypeptide is Hemoglobin subunit beta-Y (HBBY) (Mesocricetus auratus (Golden hamster)).